A 229-amino-acid polypeptide reads, in one-letter code: Ribonuclease 3 (229 aa).

The region spanning 5–127 (LARLERQLGY…LIGAIYLDAG (123 aa)) is the RNase III domain. Glu40 lines the Mg(2+) pocket. Asp44 is a catalytic residue. Mg(2+)-binding residues include Asp113 and Glu116. The active site involves Glu116. The DRBM domain occupies 154-224 (DPKTRLQEFL…AAAALIALGV (71 aa)).

The protein belongs to the ribonuclease III family. As to quaternary structure, homodimer. Requires Mg(2+) as cofactor.

Its subcellular location is the cytoplasm. The enzyme catalyses Endonucleolytic cleavage to 5'-phosphomonoester.. Digests double-stranded RNA. Involved in the processing of primary rRNA transcript to yield the immediate precursors to the large and small rRNAs (23S and 16S). Processes some mRNAs, and tRNAs when they are encoded in the rRNA operon. Processes pre-crRNA and tracrRNA of type II CRISPR loci if present in the organism. This Pseudomonas fluorescens (strain SBW25) protein is Ribonuclease 3.